Consider the following 205-residue polypeptide: Holliday junction branch migration complex subunit RuvA (205 aa).

The tract at residues 1 to 64 (MIGRLKGILI…ENLHQLFGFA (64 aa)) is domain I. A domain II region spans residues 65 to 143 (EQRDRSLFRT…NWDLPQGDML (79 aa)). The flexible linker stretch occupies residues 144–153 (AHGEIQAIAS). Residues 153–205 (SDNDIYAEAESALIALGYKPVDAAKMVASAAKQKPEARSEELIRIALRSLAGV) form a domain III region.

The protein belongs to the RuvA family. As to quaternary structure, homotetramer. Forms an RuvA(8)-RuvB(12)-Holliday junction (HJ) complex. HJ DNA is sandwiched between 2 RuvA tetramers; dsDNA enters through RuvA and exits via RuvB. An RuvB hexamer assembles on each DNA strand where it exits the tetramer. Each RuvB hexamer is contacted by two RuvA subunits (via domain III) on 2 adjacent RuvB subunits; this complex drives branch migration. In the full resolvosome a probable DNA-RuvA(4)-RuvB(12)-RuvC(2) complex forms which resolves the HJ.

It localises to the cytoplasm. Functionally, the RuvA-RuvB-RuvC complex processes Holliday junction (HJ) DNA during genetic recombination and DNA repair, while the RuvA-RuvB complex plays an important role in the rescue of blocked DNA replication forks via replication fork reversal (RFR). RuvA specifically binds to HJ cruciform DNA, conferring on it an open structure. The RuvB hexamer acts as an ATP-dependent pump, pulling dsDNA into and through the RuvAB complex. HJ branch migration allows RuvC to scan DNA until it finds its consensus sequence, where it cleaves and resolves the cruciform DNA. The polypeptide is Holliday junction branch migration complex subunit RuvA (Cellvibrio japonicus (strain Ueda107) (Pseudomonas fluorescens subsp. cellulosa)).